The following is a 158-amino-acid chain: UPF0260 protein RHE_CH01262 (158 aa).

It belongs to the UPF0260 family.

The chain is UPF0260 protein RHE_CH01262 from Rhizobium etli (strain ATCC 51251 / DSM 11541 / JCM 21823 / NBRC 15573 / CFN 42).